The primary structure comprises 63 residues: Probable rubredoxin (63 aa).

The Rubredoxin-like domain maps to 11–62; it reads MKRYKCRVCGYIYDPEKGEPRTDTPPGTPFEDLPETWRCPSCGAKKKMFKPL. Fe cation-binding residues include C16, C19, C49, and C52.

Belongs to the rubredoxin family. It depends on Fe(3+) as a cofactor.

Rubredoxin is a small nonheme, iron protein lacking acid-labile sulfide. Its single Fe, chelated to 4 Cys, functions as an electron acceptor and may also stabilize the conformation of the molecule. This chain is Probable rubredoxin, found in Methanothermobacter thermautotrophicus (strain ATCC 29096 / DSM 1053 / JCM 10044 / NBRC 100330 / Delta H) (Methanobacterium thermoautotrophicum).